A 188-amino-acid chain; its full sequence is MKGKMLLIFMMIVMIASSAMAAEAEHAGGDLKDWAFKVINFAILVFIIVKFLGKPIKNYFAQRKELIEKSIRESQEAKELAQKALQEVEEKLKLKDKEVQDILDTAKKIGEQEKIQIVQESEKLKEKILEQAKTNIEFEVKMAKDALRLEAAELAIQLSEQKLKEKITPEEQEKLLQESIKIIEGRKN.

The chain crosses the membrane as a helical span at residues 5–25 (MLLIFMMIVMIASSAMAAEAE).

It belongs to the ATPase B chain family. In terms of assembly, F-type ATPases have 2 components, F(1) - the catalytic core - and F(0) - the membrane proton channel. F(1) has five subunits: alpha(3), beta(3), gamma(1), delta(1), epsilon(1). F(0) has three main subunits: a(1), b(2) and c(10-14). The alpha and beta chains form an alternating ring which encloses part of the gamma chain. F(1) is attached to F(0) by a central stalk formed by the gamma and epsilon chains, while a peripheral stalk is formed by the delta and b chains.

It is found in the cell inner membrane. Its function is as follows. F(1)F(0) ATP synthase produces ATP from ADP in the presence of a proton or sodium gradient. F-type ATPases consist of two structural domains, F(1) containing the extramembraneous catalytic core and F(0) containing the membrane proton channel, linked together by a central stalk and a peripheral stalk. During catalysis, ATP synthesis in the catalytic domain of F(1) is coupled via a rotary mechanism of the central stalk subunits to proton translocation. In terms of biological role, component of the F(0) channel, it forms part of the peripheral stalk, linking F(1) to F(0). The sequence is that of ATP synthase subunit b from Thermodesulfovibrio yellowstonii (strain ATCC 51303 / DSM 11347 / YP87).